A 347-amino-acid chain; its full sequence is D-alanine--D-alanine ligase (347 aa).

An ATP-grasp domain is found at 131–333 (KRVLESAGIA…YPELIERLVD (203 aa)). ATP is bound at residue 161–216 (EEKLAYPVFAKPSNMGSSVGISKSENQEELRQALKLAFRYDSRVLVEQGVNAREIE). Mg(2+)-binding residues include D287, E300, and N302.

The protein belongs to the D-alanine--D-alanine ligase family. The cofactor is Mg(2+). Requires Mn(2+) as cofactor.

The protein localises to the cytoplasm. The enzyme catalyses 2 D-alanine + ATP = D-alanyl-D-alanine + ADP + phosphate + H(+). It functions in the pathway cell wall biogenesis; peptidoglycan biosynthesis. Cell wall formation. This Streptococcus pneumoniae (strain P1031) protein is D-alanine--D-alanine ligase.